The following is a 290-amino-acid chain: Porphobilinogen deaminase (290 aa).

An S-(dipyrrolylmethanemethyl)cysteine modification is found at cysteine 238.

This sequence belongs to the HMBS family. As to quaternary structure, monomer. Dipyrromethane serves as cofactor.

It catalyses the reaction 4 porphobilinogen + H2O = hydroxymethylbilane + 4 NH4(+). Its pathway is porphyrin-containing compound metabolism; protoporphyrin-IX biosynthesis; coproporphyrinogen-III from 5-aminolevulinate: step 2/4. Tetrapolymerization of the monopyrrole PBG into the hydroxymethylbilane pre-uroporphyrinogen in several discrete steps. This Clostridium botulinum (strain Eklund 17B / Type B) protein is Porphobilinogen deaminase.